Reading from the N-terminus, the 146-residue chain is Hemoglobin subunit beta (146 aa).

N-acetylvaline is present on valine 1. One can recognise a Globin domain in the interval 2 to 146 (HLTGEEKAAV…VANALAHKYH (145 aa)). A Phosphothreonine modification is found at threonine 12. Serine 44 carries the post-translational modification Phosphoserine. Position 59 is an N6-acetyllysine (lysine 59). A heme b-binding site is contributed by histidine 63. Lysine 82 carries the post-translational modification N6-acetyllysine. Histidine 92 serves as a coordination point for heme b. At cysteine 93 the chain carries S-nitrosocysteine. Residue lysine 144 is modified to N6-acetyllysine.

Belongs to the globin family. Heterotetramer of two alpha chains and two beta chains. In terms of tissue distribution, red blood cells.

Its function is as follows. Involved in oxygen transport from the lung to the various peripheral tissues. This is Hemoglobin subunit beta (HBB) from Martes foina (Beech marten).